The following is a 319-amino-acid chain: Transcription factor STKL2 (319 aa).

A disordered region spans residues 1-119 (MAPLESPATA…NKKANPQRVW (119 aa)). The span at 21-34 (EIFKSSSEESKPKD) shows a compositional bias: basic and acidic residues. The span at 38–55 (VPSSKTLKSPSAAVNSKT) shows a compositional bias: polar residues. The segment covering 89–112 (RAGEGSTSRDMHVKRVKKEDDNKK) has biased composition (basic and acidic residues).

The protein belongs to the GeBP family. As to expression, expressed strongly in leaves and flowers, weakly in roots, and very weakly in stems.

The protein resides in the nucleus. Its function is as follows. Transcription repressor that binds DNA in a sequence-specific manner, 5'-GCCT-3', to regulate the expression of PGR. Acts as a modulatory component for the glucose-triggered developmental leaf growth process. The sequence is that of Transcription factor STKL2 from Arabidopsis thaliana (Mouse-ear cress).